The primary structure comprises 155 residues: SsrA-binding protein (155 aa).

Belongs to the SmpB family.

It is found in the cytoplasm. Functionally, required for rescue of stalled ribosomes mediated by trans-translation. Binds to transfer-messenger RNA (tmRNA), required for stable association of tmRNA with ribosomes. tmRNA and SmpB together mimic tRNA shape, replacing the anticodon stem-loop with SmpB. tmRNA is encoded by the ssrA gene; the 2 termini fold to resemble tRNA(Ala) and it encodes a 'tag peptide', a short internal open reading frame. During trans-translation Ala-aminoacylated tmRNA acts like a tRNA, entering the A-site of stalled ribosomes, displacing the stalled mRNA. The ribosome then switches to translate the ORF on the tmRNA; the nascent peptide is terminated with the 'tag peptide' encoded by the tmRNA and targeted for degradation. The ribosome is freed to recommence translation, which seems to be the essential function of trans-translation. The sequence is that of SsrA-binding protein from Geobacillus thermodenitrificans (strain NG80-2).